We begin with the raw amino-acid sequence, 157 residues long: MITCLPLLAGEGARRKGDIGMRNKNKRLAQYATELRRNMTDAEYALWYHLRNKLFCGIRFNRQVIIGHYIVDFCSRKLKLVIELDGIQHVEQEQYDLERTKFLTAQGYKVIRFWNDEVLKNIDNVLEAIYVEIEHLSPPHFGSSPHKWVEPRLEVLK.

It to E.coli YcjD and H.influenzae HI_0925.

This is an uncharacterized protein from Haemophilus influenzae (strain ATCC 51907 / DSM 11121 / KW20 / Rd).